A 348-amino-acid chain; its full sequence is Phenylalanine--tRNA ligase alpha subunit (348 aa).

Residue Glu-262 participates in Mg(2+) binding.

It belongs to the class-II aminoacyl-tRNA synthetase family. Phe-tRNA synthetase alpha subunit type 1 subfamily. In terms of assembly, tetramer of two alpha and two beta subunits. The cofactor is Mg(2+).

Its subcellular location is the cytoplasm. It catalyses the reaction tRNA(Phe) + L-phenylalanine + ATP = L-phenylalanyl-tRNA(Phe) + AMP + diphosphate + H(+). The polypeptide is Phenylalanine--tRNA ligase alpha subunit (Streptococcus pneumoniae (strain JJA)).